A 185-amino-acid polypeptide reads, in one-letter code: Ribulose bisphosphate carboxylase small subunit, chloroplastic 2 (185 aa).

Residues 1–45 (MAAVIAKSSVSAAVARPARSSVRPMAALKPAVKAAPVAAPAQANQ) constitute a chloroplast transit peptide. At Met46 the chain carries N-methylmethionine.

This sequence belongs to the RuBisCO small chain family. Heterohexadecamer of 8 large and 8 small subunits.

It is found in the plastid. It localises to the chloroplast. The protein localises to the chloroplast stroma. In terms of biological role, ruBisCO catalyzes two reactions: the carboxylation of D-ribulose 1,5-bisphosphate, the primary event in carbon dioxide fixation, as well as the oxidative fragmentation of the pentose substrate. Both reactions occur simultaneously and in competition at the same active site. Although the small subunit is not catalytic it is essential for maximal activity. This Chlamydomonas reinhardtii (Chlamydomonas smithii) protein is Ribulose bisphosphate carboxylase small subunit, chloroplastic 2.